A 357-amino-acid chain; its full sequence is O-methyltransferase 1, chloroplastic (357 aa).

The transit peptide at 1 to 53 (MPVLPWLAAAATTPVRRSPPLPATPRALLRLPASSFPPWSNCAKSGLPPRGPF) directs the protein to the chloroplast. A disordered region spans residues 50 to 71 (RGPFATAADTPLGGSLPEPEEE).

The protein belongs to the methyltransferase superfamily. LCMT family. Expressed in roots, leaf sheaths, flag leaves and panicles.

It is found in the plastid. It localises to the chloroplast. The catalysed reaction is N-acetylserotonin + S-adenosyl-L-methionine = melatonin + S-adenosyl-L-homocysteine + H(+). It functions in the pathway aromatic compound metabolism; melatonin biosynthesis; melatonin from serotonin: step 1/2. Functionally, involved in melatonin biosynthesis. Can function as acetylserotonin O-methyltransferase. Catalyzes the transfer of a methyl group onto N-acetylserotonin, producing melatonin (N-acetyl-5-methoxytryptamine). Involved in the regulation of jasmonate- and brassinosteroid-mediated plant growth and defense responses. The sequence is that of O-methyltransferase 1, chloroplastic from Oryza sativa subsp. japonica (Rice).